We begin with the raw amino-acid sequence, 301 residues long: HPr kinase/phosphorylase (301 aa).

Residues histidine 134 and lysine 155 contribute to the active site. 149-156 provides a ligand contact to ATP; it reads GKSGLGKS. Position 156 (serine 156) interacts with Mg(2+). The active-site Proton acceptor; for phosphorylation activity. Proton donor; for dephosphorylation activity is the aspartate 173. The segment at 196-205 is important for the catalytic mechanism of both phosphorylation and dephosphorylation; sequence LEVRGLGIIN. Glutamate 197 contacts Mg(2+). Arginine 239 is an active-site residue. The interval 260–265 is important for the catalytic mechanism of dephosphorylation; it reads PITPGK.

Belongs to the HPrK/P family. Homohexamer. Requires Mg(2+) as cofactor.

The enzyme catalyses [HPr protein]-L-serine + ATP = [HPr protein]-O-phospho-L-serine + ADP + H(+). The catalysed reaction is [HPr protein]-O-phospho-L-serine + phosphate + H(+) = [HPr protein]-L-serine + diphosphate. Its function is as follows. Catalyzes the ATP- as well as the pyrophosphate-dependent phosphorylation of a specific serine residue in HPr, a phosphocarrier protein of the phosphoenolpyruvate-dependent sugar phosphotransferase system (PTS). HprK/P also catalyzes the pyrophosphate-producing, inorganic phosphate-dependent dephosphorylation (phosphorolysis) of seryl-phosphorylated HPr (P-Ser-HPr). The two antagonistic activities of HprK/P are regulated by several intracellular metabolites, which change their concentration in response to the absence or presence of rapidly metabolisable carbon sources (glucose, fructose, etc.) in the growth medium. Therefore, by controlling the phosphorylation state of HPr, HPrK/P is a sensor enzyme that plays a major role in the regulation of carbon metabolism and sugar transport: it mediates carbon catabolite repression (CCR), and regulates PTS-catalyzed carbohydrate uptake and inducer exclusion. The sequence is that of HPr kinase/phosphorylase from Malacoplasma penetrans (strain HF-2) (Mycoplasma penetrans).